The chain runs to 350 residues: Protein-glutamate methylesterase/protein-glutamine glutaminase 1 (350 aa).

A Response regulatory domain is found at 1-116 (MVVDDSAVVR…KGFLHDSAKV (116 aa)). A 4-aspartylphosphate modification is found at Asp-50. The CheB-type methylesterase domain occupies 160-350 (LKTTEQLVAI…IPQAILDCSH (191 aa)). Residues Ser-172, His-198, and Asp-294 contribute to the active site.

This sequence belongs to the CheB family. Post-translationally, phosphorylated by CheA. Phosphorylation of the N-terminal regulatory domain activates the methylesterase activity.

Its subcellular location is the cytoplasm. The catalysed reaction is [protein]-L-glutamate 5-O-methyl ester + H2O = L-glutamyl-[protein] + methanol + H(+). The enzyme catalyses L-glutaminyl-[protein] + H2O = L-glutamyl-[protein] + NH4(+). Involved in chemotaxis. Part of a chemotaxis signal transduction system that modulates chemotaxis in response to various stimuli. Catalyzes the demethylation of specific methylglutamate residues introduced into the chemoreceptors (methyl-accepting chemotaxis proteins or MCP) by CheR. Also mediates the irreversible deamidation of specific glutamine residues to glutamic acid. In Photobacterium profundum (strain SS9), this protein is Protein-glutamate methylesterase/protein-glutamine glutaminase 1.